The chain runs to 875 residues: Importin subunit beta-1 (875 aa).

Methionine 1 carries the post-translational modification N-acetylmethionine. 5 HEAT repeats span residues 2–31 (ELIT…AAVE), 33–64 (LPTF…IRLL), 84–122 (ANAR…EIPV), 128–159 (LIPQ…ICQD), and 169–201 (SNEI…LNSL). At serine 12 the chain carries Phosphoserine. The Importin N-terminal domain maps to 21–100 (AQKFLERAAV…KNYVLQTLGT (80 aa)). Lysine 210 is subject to N6-acetyllysine. 14 HEAT repeats span residues 211–246 (ESER…IMSL), 252–301 (ETYM…EAAE), 313–359 (YAKG…TCCE), 363–393 (VPHV…GSIL), 401–437 (LKPL…ICEL), 448–484 (LAPL…YEAA), 499–536 (SSSF…EIVK), 543–591 (YPAV…QNVL), 599–638 (ALQI…VEVL), 643–680 (LKYM…CRAL), 685–723 (LPFC…TLAI), 731–775 (LEVV…VQGL), 785–828 (DVML…CTAF), and 830–872 (KDVL…RKLK). The tract at residues 285–461 (VCDEEMDLAI…LQCLIEGLSA (177 aa)) is essential for high affinity interaction with RPL23A. The segment at 328–341 (TLTKQDENDDDDDW) is IAB-binding. The segment at 333–418 (DENDDDDDWN…MPTLIELMKD (86 aa)) is ran-GTP binding. Residues lysine 834 and lysine 866 each carry the N6-acetyllysine modification.

The protein belongs to the importin beta family. Importin beta-1 subfamily. As to quaternary structure, forms a complex with an importin alpha subunit. Interacts with XPO1. Forms a heterodimer with IPO7. The KPNB1/IPO7 heterodimer interacts with H1 histone. Interacts with SNUPN. Interacts with H2A, H2B, H3 and H4 histones. Component of an import snRNP complex composed of KPNB1, SNUPN, SMN1 and ZNF259. Component of a nuclear export receptor complex composed of KPNB1, Ran, SNUPN and XPO1. Interacts with SRY. Interacts with PRKCI/atypical protein kinase C iota. Interacts with KPNA2. Interacts with KPNA7. Interacts with SNAI1 (via zinc fingers) and SNAI2 (via zinc fingers). Interacts with SLC35G1 and STIM1. Interacts with DCAF8. Interacts with RAN. Interacts with NUMA1 (via C-terminus); this interaction is inhibited by RanGTP. Interacts with ZBED1/hDREF; required for nuclear import of ZBED1/hDREF. Interacts with SRP19. Interacts with RPL23A (via BIB domain), RPS7 and RPL5. Mono-ADP-ribosylated by PARP16.

The protein resides in the cytoplasm. It localises to the nucleus envelope. Functions in nuclear protein import, either in association with an adapter protein, like an importin-alpha subunit, which binds to nuclear localization signals (NLS) in cargo substrates, or by acting as autonomous nuclear transport receptor. Acting autonomously, serves itself as NLS receptor. Docking of the importin/substrate complex to the nuclear pore complex (NPC) is mediated by KPNB1 through binding to nucleoporin FxFG repeats and the complex is subsequently translocated through the pore by an energy requiring, Ran-dependent mechanism. At the nucleoplasmic side of the NPC, Ran binds to importin-beta and the three components separate and importin-alpha and -beta are re-exported from the nucleus to the cytoplasm where GTP hydrolysis releases Ran from importin. The directionality of nuclear import is thought to be conferred by an asymmetric distribution of the GTP- and GDP-bound forms of Ran between the cytoplasm and nucleus. Mediates autonomously the nuclear import of ribosomal proteins RPL23A, RPS7 and RPL5. In association with IPO7, mediates the nuclear import of H1 histone. In vitro, mediates nuclear import of H2A, H2B, H3 and H4 histones. Imports MRTFA, SNAI1 and PRKCI into the nucleus. The polypeptide is Importin subunit beta-1 (Kpnb1) (Rattus norvegicus (Rat)).